Here is a 276-residue protein sequence, read N- to C-terminus: Replication protein A 32 kDa subunit-A (276 aa).

Gly residues predominate over residues 19-31 (GGGGYMQSPGGFG). The tract at residues 19–47 (GGGGYMQSPGGFGSPAPTQGEKKSRSRSQ) is disordered. Positions 77–151 (VTIVGIVRHA…KSVVAFKIAP (75 aa)) form a DNA-binding region, OB.

Belongs to the replication factor A protein 2 family. Component of the replication protein A complex (RPA/RP-A), a heterotrimeric complex composed of RPA1, RPA2 and RPA3. Post-translationally, differentially phosphorylated throughout the cell cycle, becoming phosphorylated at the G1-S transition and dephosphorylated in late mitosis. Phosphorylation increases upon replication fork stalling.

Its subcellular location is the nucleus. It is found in the PML body. Its function is as follows. As part of the heterotrimeric replication protein A complex (RPA/RP-A), binds and stabilizes single-stranded DNA intermediates, that form during DNA replication or upon DNA stress. It prevents their reannealing and in parallel, recruits and activates different proteins and complexes involved in DNA metabolism. Thereby, it plays an essential role both in DNA replication and the cellular response to DNA damage. In Xenopus laevis (African clawed frog), this protein is Replication protein A 32 kDa subunit-A (rpa2-a).